The primary structure comprises 103 residues: Large ribosomal subunit protein bL21 (103 aa).

It belongs to the bacterial ribosomal protein bL21 family. Part of the 50S ribosomal subunit. Contacts protein L20.

In terms of biological role, this protein binds to 23S rRNA in the presence of protein L20. The sequence is that of Large ribosomal subunit protein bL21 from Shewanella denitrificans (strain OS217 / ATCC BAA-1090 / DSM 15013).